The primary structure comprises 161 residues: Ribosome maturation factor RimP (161 aa).

This sequence belongs to the RimP family.

It is found in the cytoplasm. Required for maturation of 30S ribosomal subunits. This Rickettsia rickettsii (strain Iowa) protein is Ribosome maturation factor RimP.